Consider the following 437-residue polypeptide: Glucose-1-phosphate adenylyltransferase (437 aa).

Alpha-D-glucose 1-phosphate is bound by residues tyrosine 113, glycine 179, glutamate 194 to lysine 195, and serine 212.

This sequence belongs to the bacterial/plant glucose-1-phosphate adenylyltransferase family. Homotetramer.

It catalyses the reaction alpha-D-glucose 1-phosphate + ATP + H(+) = ADP-alpha-D-glucose + diphosphate. Its pathway is glycan biosynthesis; glycogen biosynthesis. Its function is as follows. Involved in the biosynthesis of ADP-glucose, a building block required for the elongation reactions to produce glycogen. Catalyzes the reaction between ATP and alpha-D-glucose 1-phosphate (G1P) to produce pyrophosphate and ADP-Glc. The sequence is that of Glucose-1-phosphate adenylyltransferase from Haemophilus influenzae (strain ATCC 51907 / DSM 11121 / KW20 / Rd).